Reading from the N-terminus, the 327-residue chain is Phenylalanine--tRNA ligase alpha subunit (327 aa).

Glu252 lines the Mg(2+) pocket.

Belongs to the class-II aminoacyl-tRNA synthetase family. Phe-tRNA synthetase alpha subunit type 1 subfamily. In terms of assembly, tetramer of two alpha and two beta subunits. The cofactor is Mg(2+).

It is found in the cytoplasm. It carries out the reaction tRNA(Phe) + L-phenylalanine + ATP = L-phenylalanyl-tRNA(Phe) + AMP + diphosphate + H(+). This Yersinia pseudotuberculosis serotype O:1b (strain IP 31758) protein is Phenylalanine--tRNA ligase alpha subunit.